The primary structure comprises 186 residues: Dirigent protein 7 (186 aa).

A signal peptide spans 1–21; it reads MAKLILIIVTQILLIAAVVSA. N-linked (GlcNAc...) asparagine glycosylation is found at Asn70, Asn91, and Asn126.

Belongs to the plant dirigent protein family. Homodimer.

It localises to the secreted. Its subcellular location is the extracellular space. The protein localises to the apoplast. Dirigent proteins impart stereoselectivity on the phenoxy radical-coupling reaction, yielding optically active lignans from two molecules of coniferyl alcohol in the biosynthesis of lignans, flavonolignans, and alkaloids and thus plays a central role in plant secondary metabolism. This chain is Dirigent protein 7 (DIR7), found in Arabidopsis thaliana (Mouse-ear cress).